We begin with the raw amino-acid sequence, 400 residues long: Chorismate synthase (400 aa).

R40 and R46 together coordinate NADP(+). Residues 135-137 (RAS), 257-258 (QA), G301, 316-320 (KPIST), and R342 each bind FMN.

This sequence belongs to the chorismate synthase family. In terms of assembly, homotetramer. FMNH2 serves as cofactor.

It catalyses the reaction 5-O-(1-carboxyvinyl)-3-phosphoshikimate = chorismate + phosphate. Its pathway is metabolic intermediate biosynthesis; chorismate biosynthesis; chorismate from D-erythrose 4-phosphate and phosphoenolpyruvate: step 7/7. In terms of biological role, catalyzes the anti-1,4-elimination of the C-3 phosphate and the C-6 proR hydrogen from 5-enolpyruvylshikimate-3-phosphate (EPSP) to yield chorismate, which is the branch point compound that serves as the starting substrate for the three terminal pathways of aromatic amino acid biosynthesis. This reaction introduces a second double bond into the aromatic ring system. This chain is Chorismate synthase, found in Tropheryma whipplei (strain TW08/27) (Whipple's bacillus).